A 689-amino-acid chain; its full sequence is MAQHTFLVEIGTAELPPKALRSLAEAFADNFKAELTKADLAFGDIEWFASPRRLALKVHALASEQPSKSVEKRGPAVSQAFDAEGKPTKAAEGWARGNGITVEQAERLVTDKGEWLVHTAKVEGRPAKDLLGELVASALAKLPIPKMMRWGDKTIQFVRPVFTVTLLLDGELVPAHILGIDSARTIRGHRFMGEPEFTIDNASQYPQILLEKGKVVADFMARKAKIKADAEAAAAAFGGVADLDDALLEEVTALVEWPVVLTANFEEKFLAVPAEALVHTMKGDQKYFPVYDKNGKLLPKFIFVTNIESKDPSQIISGNEKVVRPRLSDAEFFFKTDLKQTLASRLPRLETVLFQQQLGTVKAKVERIETVAGFIAERIGANVAQAKRAGLLSKCDLMTNMVGEFASTQGVMGMHYARHDGEDEVVAVALNEQYMPRFAGDALPSALEACAVALADKLDTLAGIFGIGMLPKGDKDPFALRRAAIGALRIMTEKQLDLDLVELVEEAVRVYGDKLTNKTVVTDVVDFMLGRFRAAYQDEGIGADVVLAVLARRPTRPLDFDRRVKAVSHFRSLDAALALAAANKRVSNILAKVEGELPTAVKPELLQDAAEKALATQVAELQAELAPLFAAGDYQAALTRLAALREPVDTFFNEVMVMADDEALKANRLALLNNLRNLFLQVADISLLQ.

Belongs to the class-II aminoacyl-tRNA synthetase family. As to quaternary structure, tetramer of two alpha and two beta subunits.

It is found in the cytoplasm. The enzyme catalyses tRNA(Gly) + glycine + ATP = glycyl-tRNA(Gly) + AMP + diphosphate. This chain is Glycine--tRNA ligase beta subunit, found in Aeromonas salmonicida (strain A449).